A 261-amino-acid polypeptide reads, in one-letter code: Carnitinyl-CoA dehydratase (261 aa).

The Nucleophile role is filled by glutamate 111. Glutamate 131 serves as the catalytic Proton acceptor.

The protein belongs to the enoyl-CoA hydratase/isomerase family.

It catalyses the reaction (R)-carnitinyl-CoA = crotonobetainyl-CoA + H2O. Its pathway is amine and polyamine metabolism; carnitine metabolism. Catalyzes the reversible dehydration of L-carnitinyl-CoA to crotonobetainyl-CoA. The sequence is that of Carnitinyl-CoA dehydratase from Escherichia coli (strain SMS-3-5 / SECEC).